The following is a 457-amino-acid chain: Multidrug resistance protein MdtK (457 aa).

12 helical membrane passes run 11-31 (LSALAVPVIIAQVSQTSMGVV), 53-73 (IWLPAILFGHGLLLALTPVVA), 93-113 (FLAAIISVLTMLVLYQGEYAI), 127-147 (AIGYLHALLWGVPGYLFYQVL), 159-179 (PGMMIGFIGLLINIPINYIFI), 190-210 (GVGCGVATASVYWIMMLLMML), 249-269 (LLFEVTLFAVVALLVLPLGVV), 276-296 (IALNFSSLMFVLPLSVGVATT), 313-333 (IAAHTGIMAGVALACCTAIFT), 357-377 (LMLLAAVYQISDAVQVIGTGV), 387-407 (IFYITFVAYWVLGLPSGYLLA), and 417-437 (GPAGFWCGFIIGLTAAAVMMV).

The protein belongs to the multi antimicrobial extrusion (MATE) (TC 2.A.66.1) family. MdtK subfamily.

Its subcellular location is the cell inner membrane. Multidrug efflux pump that functions probably as a Na(+)/drug antiporter. The chain is Multidrug resistance protein MdtK from Pectobacterium atrosepticum (strain SCRI 1043 / ATCC BAA-672) (Erwinia carotovora subsp. atroseptica).